The primary structure comprises 88 residues: MDFFSWVMITAGFGMAIGSLGTGIGQGLAVKSALEGVARNPGASGKILTTMMIGLAMIESLAIYVFVVAMIILFANPFQDVVLELLAK.

The next 2 membrane-spanning stretches (helical) occupy residues 4–24 (FSWV…GTGI) and 53–73 (IGLA…MIIL).

Belongs to the ATPase C chain family. F-type ATPases have 2 components, F(1) - the catalytic core - and F(0) - the membrane proton channel. F(1) has five subunits: alpha(3), beta(3), gamma(1), delta(1), epsilon(1). F(0) has three main subunits: a(1), b(2) and c(10-14). The alpha and beta chains form an alternating ring which encloses part of the gamma chain. F(1) is attached to F(0) by a central stalk formed by the gamma and epsilon chains, while a peripheral stalk is formed by the delta and b chains.

It localises to the cell inner membrane. Functionally, f(1)F(0) ATP synthase produces ATP from ADP in the presence of a proton or sodium gradient. F-type ATPases consist of two structural domains, F(1) containing the extramembraneous catalytic core and F(0) containing the membrane proton channel, linked together by a central stalk and a peripheral stalk. During catalysis, ATP synthesis in the catalytic domain of F(1) is coupled via a rotary mechanism of the central stalk subunits to proton translocation. Its function is as follows. Key component of the F(0) channel; it plays a direct role in translocation across the membrane. A homomeric c-ring of between 10-14 subunits forms the central stalk rotor element with the F(1) delta and epsilon subunits. The protein is ATP synthase subunit c 2 of Syntrophotalea carbinolica (strain DSM 2380 / NBRC 103641 / GraBd1) (Pelobacter carbinolicus).